The primary structure comprises 522 residues: MEKDNDFKDPFLASTEEEELDPATQKALMEYLGVGSRASSLVSFSSTAVDIPPISGVGDFVREFRIESRKLWKLAGPAIFTTMSQYSLGAVTQVFAGHISTLALAAVSIENSVIAGFSFGIMLGMGSALETLCGQAFGAGKVSMLGVYLQRSWVILSVTALFLSLIYIFAAPILTFIGQTAAISAMAGIFSIYMIPQIFAYAINFPTAKFLQSQSKIMVMAGISGVVLVIHSFFTWLVMSRLHWGLPGLALVLNTSWWVIVVAQLVYIFNCTCGEAWSGFTWEAFHNLWGFVKLSLASAAMLCLEIWYFMALVLFAGYLKNAEVSVAALSICMNILGWAAMVAFGTNAAVSVRVSNELGASHPRTAKFSLVVAVILSTAIGMFIAAGLLFFRNEYPVLFVEDEEVRNVVRELTPMLAFCIVINNVQPVLSGVAVGAGWQAVVAYVNIACYYLFGVPFGLLLGFKLEYGVMGIWWGMVTGTFVQSIVLTWMICKTNWEKEASMAEERIKEWGGVPAEKETLLN.

A run of 12 helical transmembrane segments spans residues 89–109 (GAVT…AVSI), 113–133 (VIAG…ETLC), 154–174 (VILS…APIL), 183–203 (ISAM…AYAI), 217–237 (IMVM…FTWL), 249–269 (LALV…VYIF), 299–319 (AAML…AGYL), 324–344 (VSVA…MVAF), 371–391 (VVAV…LLFF), 415–435 (MLAF…VAVG), 441–461 (VVAY…GLLL), and 471–491 (GIWW…TWMI).

It belongs to the multi antimicrobial extrusion (MATE) (TC 2.A.66.1) family.

It localises to the membrane. Its function is as follows. Positively mediates root hair elongation. The polypeptide is Protein DETOXIFICATION 31 (Arabidopsis thaliana (Mouse-ear cress)).